The following is a 484-amino-acid chain: Serine hydroxymethyltransferase, cytosolic (484 aa).

Ala-2 carries the post-translational modification N-acetylalanine. The residue at position 6 (Asn-6) is a Deamidated asparagine; alternate. Residues 6–7 constitute a cross-link (isoaspartyl glycine isopeptide (Asn-Gly); alternate); sequence NG. Cys-204 functions as the Nucleophile in the catalytic mechanism. Catalysis depends on His-256, which acts as the Proton donor. Lys-257 is subject to N6-(pyridoxal phosphate)lysine.

Belongs to the SHMT family. In terms of assembly, homotetramer. Identified in complex with ABRAXAS2 and the other subunits of the BRISC complex, at least composed of ABRAXAS2, BRCC3/BRCC36, BABAM2 and BABAM1/NBA1. Pyridoxal 5'-phosphate is required as a cofactor. In terms of processing, deamidation of asparagine produces alternatively aspartate or isoaspartate, which in turn can be converted to aspartate through carboxylmethylation/demethylation.

It localises to the cytoplasm. The enzyme catalyses (6R)-5,10-methylene-5,6,7,8-tetrahydrofolate + glycine + H2O = (6S)-5,6,7,8-tetrahydrofolate + L-serine. The protein operates within one-carbon metabolism; tetrahydrofolate interconversion. Interconversion of serine and glycine. This chain is Serine hydroxymethyltransferase, cytosolic (SHMT1), found in Oryctolagus cuniculus (Rabbit).